Consider the following 506-residue polypeptide: Galactose/methyl galactoside import ATP-binding protein MglA (506 aa).

ABC transporter domains are found at residues 14–249 and 264–506; these read LEMK…VGRS and VMLE…SLYL. 46–53 contacts ATP; sequence GENGAGKS.

Belongs to the ABC transporter superfamily. Galactose/methyl galactoside importer (TC 3.A.1.2.3) family. As to quaternary structure, the complex is composed of one ATP-binding protein (MglA), two transmembrane proteins (MglC) and a solute-binding protein (MglB).

Its subcellular location is the cell inner membrane. It catalyses the reaction D-galactose(out) + ATP + H2O = D-galactose(in) + ADP + phosphate + H(+). It carries out the reaction methyl beta-D-galactoside(out) + ATP + H2O = methyl beta-D-galactoside(in) + ADP + phosphate + H(+). Part of the ABC transporter complex MglABC involved in galactose/methyl galactoside import. Responsible for energy coupling to the transport system. This Sodalis glossinidius (strain morsitans) protein is Galactose/methyl galactoside import ATP-binding protein MglA.